The primary structure comprises 69 residues: Conotoxin Fr3.1 (69 aa).

The signal sequence occupies residues 1-20 (MLKTGVLLLIFLVLFPLATL). The propeptide occupies 21–51 (QDADQPVERNVENKQDLNLDKRRGMKLLAQR). The residue at position 52 (Gln-52) is a Pyrrolidone carboxylic acid. Position 54 is a 4-carboxyglutamate (Glu-54). At Pro-58 the chain carries 4-hydroxyproline.

The protein belongs to the conotoxin M superfamily. Expressed by the venom duct.

It is found in the secreted. In terms of biological role, probable toxin. The protein is Conotoxin Fr3.1 of Conus frigidus (Frigid cone).